The sequence spans 910 residues: Translation factor GUF1 homolog, mitochondrial (910 aa).

The interval 126-188 (RRGNGLPFER…DGGGAPEHPQ (63 aa)) is disordered. One can recognise a tr-type G domain in the interval 189-366 (QNVRNFCILA…RIVSDIPCPA (178 aa)). GTP-binding positions include 198-205 (AHIDSGKS), 259-263 (DTPGH), and 313-316 (NKID). The segment at 639 to 683 (GSGDGRADGSADGSADGSADGSGDSSAHGSSDRRGAGCARGSDDI) is disordered. The segment covering 646–667 (DGSADGSADGSADGSGDSSAHG) has biased composition (low complexity).

This sequence belongs to the TRAFAC class translation factor GTPase superfamily. Classic translation factor GTPase family. LepA subfamily.

It is found in the mitochondrion inner membrane. The catalysed reaction is GTP + H2O = GDP + phosphate + H(+). Functionally, promotes mitochondrial protein synthesis. May act as a fidelity factor of the translation reaction, by catalyzing a one-codon backward translocation of tRNAs on improperly translocated ribosomes. Binds to mitochondrial ribosomes in a GTP-dependent manner. This Plasmodium vivax (strain Salvador I) protein is Translation factor GUF1 homolog, mitochondrial.